A 563-amino-acid chain; its full sequence is Urocanate hydratase (563 aa).

NAD(+) contacts are provided by residues 53 to 54, glutamine 131, 177 to 179, glutamate 197, arginine 202, 243 to 244, 264 to 268, 274 to 275, and tyrosine 323; these read GG, GMG, NA, QTSAH, and YL. Cysteine 411 is a catalytic residue. Glycine 493 lines the NAD(+) pocket.

Belongs to the urocanase family. NAD(+) is required as a cofactor.

The protein localises to the cytoplasm. The catalysed reaction is 4-imidazolone-5-propanoate = trans-urocanate + H2O. It participates in amino-acid degradation; L-histidine degradation into L-glutamate; N-formimidoyl-L-glutamate from L-histidine: step 2/3. Catalyzes the conversion of urocanate to 4-imidazolone-5-propionate. This Yersinia pestis bv. Antiqua (strain Antiqua) protein is Urocanate hydratase.